The following is an 874-amino-acid chain: Protein translocase subunit SecA (874 aa).

Residues Q85, 103–107 (GEGKT), and D492 contribute to the ATP site. The segment covering 839–854 (EEGPKKPYRREQKIGR) has biased composition (basic and acidic residues). Residues 839–864 (EEGPKKPYRREQKIGRNDPCPCGSGK) are disordered. Zn(2+) contacts are provided by C858, C860, C869, and C870.

The protein belongs to the SecA family. As to quaternary structure, monomer and homodimer. Part of the essential Sec protein translocation apparatus which comprises SecA, SecYEG and auxiliary proteins SecDF. Other proteins may also be involved. The cofactor is Zn(2+).

It localises to the cell membrane. The protein resides in the cytoplasm. The enzyme catalyses ATP + H2O + cellular proteinSide 1 = ADP + phosphate + cellular proteinSide 2.. In terms of biological role, part of the Sec protein translocase complex. Interacts with the SecYEG preprotein conducting channel. Has a central role in coupling the hydrolysis of ATP to the transfer of proteins into and across the cell membrane, serving as an ATP-driven molecular motor driving the stepwise translocation of polypeptide chains across the membrane. This Carboxydothermus hydrogenoformans (strain ATCC BAA-161 / DSM 6008 / Z-2901) protein is Protein translocase subunit SecA.